Consider the following 122-residue polypeptide: Large ribosomal subunit protein uL14 (122 aa).

This sequence belongs to the universal ribosomal protein uL14 family. As to quaternary structure, part of the 50S ribosomal subunit. Forms a cluster with proteins L3 and L19. In the 70S ribosome, L14 and L19 interact and together make contacts with the 16S rRNA in bridges B5 and B8.

Functionally, binds to 23S rRNA. Forms part of two intersubunit bridges in the 70S ribosome. The chain is Large ribosomal subunit protein uL14 from Bifidobacterium animalis subsp. lactis (strain AD011).